The primary structure comprises 233 residues: Ion-translocating oxidoreductase complex subunit E (233 aa).

Transmembrane regions (helical) follow at residues 18–38 (ALVQ…ATNA), 39–59 (LGLG…VSAL), 69–89 (IPIY…LINA), 92–112 (FGLY…CIVI), 128–148 (ALDG…LGAL), and 182–202 (PFLL…LLAG).

Belongs to the NqrDE/RnfAE family. In terms of assembly, the complex is composed of six subunits: RnfA, RnfB, RnfC, RnfD, RnfE and RnfG.

The protein localises to the cell inner membrane. Its function is as follows. Part of a membrane-bound complex that couples electron transfer with translocation of ions across the membrane. This chain is Ion-translocating oxidoreductase complex subunit E, found in Yersinia pseudotuberculosis serotype IB (strain PB1/+).